The primary structure comprises 394 residues: ATP phosphoribosyltransferase regulatory subunit (394 aa).

Belongs to the class-II aminoacyl-tRNA synthetase family. HisZ subfamily. Heteromultimer composed of HisG and HisZ subunits.

It is found in the cytoplasm. It participates in amino-acid biosynthesis; L-histidine biosynthesis; L-histidine from 5-phospho-alpha-D-ribose 1-diphosphate: step 1/9. Its function is as follows. Required for the first step of histidine biosynthesis. May allow the feedback regulation of ATP phosphoribosyltransferase activity by histidine. This is ATP phosphoribosyltransferase regulatory subunit from Saccharophagus degradans (strain 2-40 / ATCC 43961 / DSM 17024).